The chain runs to 80 residues: Small ribosomal subunit protein bS18 (80 aa).

It belongs to the bacterial ribosomal protein bS18 family. As to quaternary structure, part of the 30S ribosomal subunit. Forms a tight heterodimer with protein bS6.

In terms of biological role, binds as a heterodimer with protein bS6 to the central domain of the 16S rRNA, where it helps stabilize the platform of the 30S subunit. The sequence is that of Small ribosomal subunit protein bS18 from Staphylococcus epidermidis (strain ATCC 35984 / DSM 28319 / BCRC 17069 / CCUG 31568 / BM 3577 / RP62A).